Consider the following 227-residue polypeptide: NAD(P)H-quinone oxidoreductase subunit K, chloroplastic (227 aa).

Residues Cys43, Cys44, Cys108, and Cys139 each coordinate [4Fe-4S] cluster.

The protein belongs to the complex I 20 kDa subunit family. NDH is composed of at least 16 different subunits, 5 of which are encoded in the nucleus. Requires [4Fe-4S] cluster as cofactor.

Its subcellular location is the plastid. It is found in the chloroplast thylakoid membrane. It catalyses the reaction a plastoquinone + NADH + (n+1) H(+)(in) = a plastoquinol + NAD(+) + n H(+)(out). It carries out the reaction a plastoquinone + NADPH + (n+1) H(+)(in) = a plastoquinol + NADP(+) + n H(+)(out). Functionally, NDH shuttles electrons from NAD(P)H:plastoquinone, via FMN and iron-sulfur (Fe-S) centers, to quinones in the photosynthetic chain and possibly in a chloroplast respiratory chain. The immediate electron acceptor for the enzyme in this species is believed to be plastoquinone. Couples the redox reaction to proton translocation, and thus conserves the redox energy in a proton gradient. The chain is NAD(P)H-quinone oxidoreductase subunit K, chloroplastic from Ranunculus macranthus (Large buttercup).